The following is a 148-amino-acid chain: Putative FAD-linked sulfhydryl oxidase 096R (148 aa).

The ERV/ALR sulfhydryl oxidase domain occupies 1–103 (MSIDPKLWGN…LAAKTVFQRY (103 aa)). The cysteines at positions 48 and 51 are disulfide-linked. Residues 122–142 (WSPWLTTALAVILVVVVAGIG) form a helical membrane-spanning segment.

This sequence belongs to the IIV-6 347L family. It depends on FAD as a cofactor.

The protein localises to the membrane. It catalyses the reaction 2 R'C(R)SH + O2 = R'C(R)S-S(R)CR' + H2O2. FAD-dependent sulfhydryl oxidase that catalyzes disulfide bond formation. This Aedes vexans (Inland floodwater mosquito) protein is Putative FAD-linked sulfhydryl oxidase 096R.